Here is a 256-residue protein sequence, read N- to C-terminus: Triosephosphate isomerase (256 aa).

Residue 12 to 14 (NWK) participates in substrate binding. Histidine 99 acts as the Electrophile in catalysis. The Proton acceptor role is filled by glutamate 169. Substrate is bound by residues glycine 175, serine 214, and 235-236 (GG).

This sequence belongs to the triosephosphate isomerase family. In terms of assembly, homodimer.

The protein localises to the cytoplasm. The enzyme catalyses D-glyceraldehyde 3-phosphate = dihydroxyacetone phosphate. The protein operates within carbohydrate biosynthesis; gluconeogenesis. It participates in carbohydrate degradation; glycolysis; D-glyceraldehyde 3-phosphate from glycerone phosphate: step 1/1. Functionally, involved in the gluconeogenesis. Catalyzes stereospecifically the conversion of dihydroxyacetone phosphate (DHAP) to D-glyceraldehyde-3-phosphate (G3P). In Mesorhizobium japonicum (strain LMG 29417 / CECT 9101 / MAFF 303099) (Mesorhizobium loti (strain MAFF 303099)), this protein is Triosephosphate isomerase.